The following is a 655-amino-acid chain: A-type voltage-gated potassium channel KCND3 (655 aa).

At 1–182 the chain is on the cytoplasmic side; that stretch reads MAAGVAAWLP…FENPHTSTLA (182 aa). 2 interaction with KCNIP1 regions span residues 6–21 and 70–78; these read AAWL…GWMP and EKEFFFNED. His-104, Cys-110, Cys-131, and Cys-132 together coordinate Zn(2+). Ser-153 is modified (phosphoserine). A helical membrane pass occupies residues 183-204; it reads LVFYYVTGFFIAVSVITNVVET. At 205 to 223 the chain is on the extracellular side; it reads VPCGTVPGSKELPCGERYS. A helical transmembrane segment spans residues 224–246; the sequence is VAFFCLDTACVMIFTVEYLLRLF. At 247 to 253 the chain is on the cytoplasmic side; the sequence is AAPSRYR. Residues 254–277 form a helical membrane-spanning segment; it reads FIRSVMSIIDVVAIMPYYIGLVMT. At 278–283 the chain is on the extracellular side; the sequence is NNEDVS. A helical; Voltage-sensor transmembrane segment spans residues 284–306; it reads GAFVTLRVFRVFRIFKFSRHSQG. Topologically, residues 307-318 are cytoplasmic; the sequence is LRILGYTLKSCA. The helical transmembrane segment at 319-343 threads the bilayer; it reads SELGFLLFSLTMAIIIFATVMFYAE. Residues 344-352 are Extracellular-facing; the sequence is KGSSASKFT. Positions 353 to 366 form an intramembrane region, helical; it reads SIPASFWYTIVTMT. The K(+) site is built by Thr-367, Leu-368, Gly-369, and Tyr-370. The Selectivity filter signature appears at 367 to 372; sequence TLGYGD. An intramembrane segment occupies 367-374; the sequence is TLGYGDMV. Residues 378 to 400 traverse the membrane as a helical segment; that stretch reads IAGKIFGSICSLSGVLVIALPVP. Topologically, residues 401–655 are cytoplasmic; sequence VIVSNFSRIY…TSNVVKVSVL (255 aa). Thr-459 is modified (phosphothreonine). An interaction with KCNIP1 and KCNIP2 region spans residues 470-487; it reads SLIESQHHHLLHCLEKTT. The tract at residues 474 to 489 is mediates dendritic targeting; sequence SQHHHLLHCLEKTTGL. The disordered stretch occupies residues 523 to 565; it reads SSMQNYPSTRSPSLSSHSGLTTTCCSRRSKKTTHLPNSNLPAT. Low complexity predominate over residues 529-548; the sequence is PSTRSPSLSSHSGLTTTCCS. Ser-569 bears the Phosphoserine; by CaMK2D mark. Phosphoserine is present on Ser-585. A disordered region spans residues 616–647; it reads SIPTPPALTPEGESRPPPASPGPNTNIPSITS. Positions 637–647 are enriched in polar residues; sequence GPNTNIPSITS.

Belongs to the potassium channel family. D (Shal) (TC 1.A.1.2) subfamily. Kv4.3/KCND3 sub-subfamily. As to quaternary structure, homotetramer. Heterotetramer with KCND2. Associates with the regulatory subunits KCNIP3 and KCNIP4. Interacts with KCNE1, KCNE2, SCN1B and KCNAB1 and DLG1. Component of heteromultimeric potassium channels. Identified in potassium channel complexes containing KCND1, KCND2, KCND3, KCNIP1, KCNIP2, KCNIP3, KCNIP4, DPP6 and DPP10. Interacts with KCNIP1; each KCNIP1 monomer interacts with two adjacent KCND3 subunits, through both the N-terminal inactivation ball of a KCND3 subunit and a C-terminal helix from the adjacent KCND3 subunit, clamping them together; this interaction stabilizes the tetrameric form and modulates the channel gating kinetics namely channel activation and inactivation kinetics and rate of recovery from inactivation. Interacts with DPP6; this interaction modulates the channel gating kinetics namely channel activation and inactivation kinetics and rate of recovery from inactivation. Interacts with KCNIP2; each KCNIP2 monomer interacts with two adjacent KCND3 subunits, through both the N-terminal inactivation ball of a KCND3 subunit and a C-terminal helix from the adjacent KCND3 subunit, clamping them together; this interaction modulates the channel gating kinetics. Regulated through phosphorylation at Ser-569 by CaMK2D. In terms of tissue distribution, highly expressed in brain, in particular in the retrosplenial cortex, medial habenula, anterior thalamus, hippocampus, cerebellum and lateral geniculate and superior colliculus. Highly expressed in heart atrium (at protein level) and throughout the ventricle wall, in lung and vas deferens.

Its subcellular location is the cell membrane. It is found in the sarcolemma. The protein resides in the cell projection. The protein localises to the dendrite. The enzyme catalyses K(+)(in) = K(+)(out). Pore-forming (alpha) subunit of voltage-gated A-type potassium channels that mediates transmembrane potassium transport in excitable membranes, in brain and heart. In cardiomyocytes, may generate the transient outward potassium current I(To). In neurons, may conduct the transient subthreshold somatodendritic A-type potassium current (ISA). Kinetics properties are characterized by fast activation at subthreshold membrane potentials, rapid inactivation, and quick recovery from inactivation. Channel properties are modulated by interactions with regulatory subunits. Interaction with the regulatory subunits KCNIP1 or KCNIP2 modulates the channel gating kinetics namely channel activation and inactivation kinetics and rate of recovery from inactivation. Likewise, interaction with DPP6 modulates the channel gating kinetics namely channel activation and inactivation kinetics. In Rattus norvegicus (Rat), this protein is A-type voltage-gated potassium channel KCND3.